We begin with the raw amino-acid sequence, 600 residues long: Long-chain-fatty-acid--CoA ligase FadD15 (600 aa).

It belongs to the ATP-dependent AMP-binding enzyme family.

The catalysed reaction is a long-chain fatty acid + ATP + CoA = a long-chain fatty acyl-CoA + AMP + diphosphate. It carries out the reaction dodecanoate + ATP + CoA = dodecanoyl-CoA + AMP + diphosphate. It catalyses the reaction hexadecanoate + ATP + CoA = hexadecanoyl-CoA + AMP + diphosphate. Its pathway is lipid metabolism; fatty acid biosynthesis. In terms of biological role, catalyzes the activation of long-chain fatty acids as acyl-coenzyme A (acyl-CoA), which are then transferred to the multifunctional polyketide synthase (PKS) type III for further chain extension. This Mycobacterium tuberculosis (strain ATCC 25618 / H37Rv) protein is Long-chain-fatty-acid--CoA ligase FadD15 (fadD15).